We begin with the raw amino-acid sequence, 179 residues long: Large ribosomal subunit protein uL5 (179 aa).

This sequence belongs to the universal ribosomal protein uL5 family. In terms of assembly, part of the 50S ribosomal subunit; part of the 5S rRNA/L5/L18/L25 subcomplex. Contacts the 5S rRNA and the P site tRNA. Forms a bridge to the 30S subunit in the 70S ribosome.

This is one of the proteins that bind and probably mediate the attachment of the 5S RNA into the large ribosomal subunit, where it forms part of the central protuberance. In the 70S ribosome it contacts protein S13 of the 30S subunit (bridge B1b), connecting the 2 subunits; this bridge is implicated in subunit movement. Contacts the P site tRNA; the 5S rRNA and some of its associated proteins might help stabilize positioning of ribosome-bound tRNAs. In Xylella fastidiosa (strain 9a5c), this protein is Large ribosomal subunit protein uL5.